A 492-amino-acid chain; its full sequence is NADPH:adrenodoxin oxidoreductase, mitochondrial (492 aa).

Residues 1–32 constitute a mitochondrion transit peptide; sequence MAPRCWRWWPWSSWTRTRLPPSRSIQNFGQHF. FAD-binding residues include Ala49, Glu70, Leu78, and Val114. Residues 185–188, 229–230, and Glu241 each bind NADP(+); these read QGNV and RR. Residues Ser311 and Ser318 each carry the phosphoserine modification. Residues Trp399 and 406–408 contribute to the FAD site; that span reads GVI. Gly406 is a binding site for NADP(+).

This sequence belongs to the ferredoxin--NADP reductase type 1 family. In terms of assembly, monomer. Interacts directly with FDX1. FAD is required as a cofactor. As to expression, detected in adrenal cortex and corpus luteum (at protein level).

The protein localises to the mitochondrion inner membrane. The catalysed reaction is 2 reduced [adrenodoxin] + NADP(+) + H(+) = 2 oxidized [adrenodoxin] + NADPH. It carries out the reaction 2 reduced [2Fe-2S]-[ferredoxin] + NADP(+) + H(+) = 2 oxidized [2Fe-2S]-[ferredoxin] + NADPH. It functions in the pathway steroid metabolism; cholesterol metabolism. Its function is as follows. Serves as the first electron transfer protein in all the mitochondrial P450 systems including cholesterol side chain cleavage in all steroidogenic tissues, steroid 11-beta hydroxylation in the adrenal cortex, 25-OH-vitamin D3-24 hydroxylation in the kidney, and sterol C-27 hydroxylation in the liver. Also acts as a ferredoxin--NADP(+) reductase essential for coenzyme Q biosynthesis: together with FDX2, transfers the electrons required for the hydroxylation reaction performed by COQ6. The protein is NADPH:adrenodoxin oxidoreductase, mitochondrial (FDXR) of Bos taurus (Bovine).